Consider the following 284-residue polypeptide: Nucleotide-binding protein SO_3964 (284 aa).

8–15 (GRSGSGKS) provides a ligand contact to ATP. 56–59 (DVRN) contributes to the GTP binding site.

It belongs to the RapZ-like family.

In terms of biological role, displays ATPase and GTPase activities. This chain is Nucleotide-binding protein SO_3964, found in Shewanella oneidensis (strain ATCC 700550 / JCM 31522 / CIP 106686 / LMG 19005 / NCIMB 14063 / MR-1).